The chain runs to 292 residues: Intermediate transcription factor 3 small subunit (292 aa).

The protein belongs to the orthopoxvirus OPG134 family. As to quaternary structure, heterodimer of a 45 kDa (A23R) and a 32 kDa (A8R) subunit to form the virus intermediate transcription factor (VITF)-3.

In terms of biological role, acts with RNA polymerase to initiate transcription from intermediate gene promoters. The protein is Intermediate transcription factor 3 small subunit (OPG134) of Monkeypox virus.